A 316-amino-acid polypeptide reads, in one-letter code: Aspartate carbamoyltransferase catalytic subunit (316 aa).

2 residues coordinate carbamoyl phosphate: Arg59 and Thr60. An L-aspartate-binding site is contributed by Lys88. The carbamoyl phosphate site is built by Arg109, His137, and Gln140. Positions 170 and 232 each coordinate L-aspartate. Leu269 and Pro270 together coordinate carbamoyl phosphate.

The protein belongs to the aspartate/ornithine carbamoyltransferase superfamily. ATCase family. In terms of assembly, heterooligomer of catalytic and regulatory chains.

The enzyme catalyses carbamoyl phosphate + L-aspartate = N-carbamoyl-L-aspartate + phosphate + H(+). It functions in the pathway pyrimidine metabolism; UMP biosynthesis via de novo pathway; (S)-dihydroorotate from bicarbonate: step 2/3. Catalyzes the condensation of carbamoyl phosphate and aspartate to form carbamoyl aspartate and inorganic phosphate, the committed step in the de novo pyrimidine nucleotide biosynthesis pathway. The sequence is that of Aspartate carbamoyltransferase catalytic subunit from Methanobrevibacter smithii (strain ATCC 35061 / DSM 861 / OCM 144 / PS).